Reading from the N-terminus, the 1127-residue chain is Cellulose synthase-like protein D1 (1127 aa).

The interval methionine 1–valine 24 is disordered. 2 helical membrane passes run valine 262–methionine 282 and alanine 292–leucine 312. Residues aspartate 392 and aspartate 828 contribute to the active site. The next 6 membrane-spanning stretches (helical) occupy residues valine 910–valine 930, threonine 936–isoleucine 956, leucine 982–leucine 1002, serine 1025–phenylalanine 1045, leucine 1059–glycine 1079, and threonine 1089–isoleucine 1109.

Belongs to the glycosyltransferase 2 family. Plant cellulose synthase-like D subfamily.

It is found in the golgi apparatus membrane. In terms of biological role, thought to be a Golgi-localized beta-glycan synthase that polymerize the backbones of noncellulosic polysaccharides (hemicelluloses) of plant cell wall. The chain is Cellulose synthase-like protein D1 (CSLD1) from Oryza sativa subsp. indica (Rice).